The primary structure comprises 212 residues: Thymidylate kinase (212 aa).

An ATP-binding site is contributed by 15-22; the sequence is GIDGAGKS.

The protein belongs to the thymidylate kinase family.

It carries out the reaction dTMP + ATP = dTDP + ADP. Its function is as follows. Phosphorylation of dTMP to form dTDP in both de novo and salvage pathways of dTTP synthesis. This Chromobacterium violaceum (strain ATCC 12472 / DSM 30191 / JCM 1249 / CCUG 213 / NBRC 12614 / NCIMB 9131 / NCTC 9757 / MK) protein is Thymidylate kinase.